Reading from the N-terminus, the 187-residue chain is UPF0340 protein SPT_0687 (187 aa).

Belongs to the UPF0340 family.

The sequence is that of UPF0340 protein SPT_0687 from Streptococcus pneumoniae (strain Taiwan19F-14).